A 373-amino-acid polypeptide reads, in one-letter code: MKLFEYQAKEAFREKGLPTPKGVLVRGMDELDGAFAEVGFPCVLKSQVLSGGRGKAGLIKVVKDAESAKATAKTLFESEHNVRMLLVEEAVDIDREIYLSITVDPVESKIMLIGCAEGGVEIEKLAATDPDKIVTVRVDIAEGLGGYHVNNLTYGMGLSGDLGKQVGAVVRGLYKTFRAYDAQLAEINPLFITKDGKAIAGDGKLIIDDNSVWRQPSYPLTRDYFDSEVEFEAAQEGIPYLQFNGDIALMCAGAGLTTTVFDLINDAGGHPATYVEFGGANYTKAVRTMELCLKTPSKVILVVTFGTIARADVMAQGLVEAIKAHQPKQPIVTCIRGTNEEEAFAILRDAGLEPLTNTEEAVQRAVDIAAGRA.

The region spanning 9–249 is the ATP-grasp domain; sequence KEAFREKGLP…YLQFNGDIAL (241 aa). 35 to 97 contacts ATP; sequence FAEVGFPCVL…EEAVDIDREI (63 aa). Residues Glu-186 and Asn-188 each contribute to the Mg(2+) site.

The protein belongs to the succinate/malate CoA ligase beta subunit family. As to quaternary structure, forms a complex with SauD. Requires Mg(2+) as cofactor.

It catalyses the reaction sulfoacetate + ATP + CoA = sulfoacetyl-CoA + ADP + phosphate. Its function is as follows. Involved in the degradation of sulfoacetate. Catalyzes the CoA- and ATP-dependent conversion of sulfoacetate to sulfoacetyl-CoA and ADP. Cannot use other sulfonic and carboxylic acids, and shows only residual activity with 3-sulfopropanoate and malonic acid. The sequence is that of ADP-forming sulfoacetate-CoA ligase subunit SauC from Bilophila wadsworthia (strain 3_1_6).